Reading from the N-terminus, the 320-residue chain is Ferrochelatase (320 aa).

Fe cation contacts are provided by His-194 and Glu-275.

It belongs to the ferrochelatase family.

It localises to the cytoplasm. It carries out the reaction heme b + 2 H(+) = protoporphyrin IX + Fe(2+). It functions in the pathway porphyrin-containing compound metabolism; protoheme biosynthesis; protoheme from protoporphyrin-IX: step 1/1. In terms of biological role, catalyzes the ferrous insertion into protoporphyrin IX. The sequence is that of Ferrochelatase from Xylella fastidiosa (strain M23).